The chain runs to 91 residues: DNA-directed RNA polymerase subunit Rpo11 (91 aa).

It belongs to the archaeal Rpo11/eukaryotic RPB11/RPC19 RNA polymerase subunit family. As to quaternary structure, part of the RNA polymerase complex.

The protein localises to the cytoplasm. The catalysed reaction is RNA(n) + a ribonucleoside 5'-triphosphate = RNA(n+1) + diphosphate. DNA-dependent RNA polymerase (RNAP) catalyzes the transcription of DNA into RNA using the four ribonucleoside triphosphates as substrates. This Methanococcoides burtonii (strain DSM 6242 / NBRC 107633 / OCM 468 / ACE-M) protein is DNA-directed RNA polymerase subunit Rpo11.